Here is a 590-residue protein sequence, read N- to C-terminus: Major surface protein MspTL (590 aa).

A signal peptide spans 1–19 (MKKILAFFLVFALAGAVFA).

The protein localises to the cell outer membrane. Its function is as follows. Major component of the outer membrane. The sequence is that of Major surface protein MspTL (mspTL) from Treponema lecithinolyticum.